The following is a 340-amino-acid chain: Deubiquitinase SseL (340 aa).

Residue His-222 is part of the active site. Cys-284 (nucleophile) is an active-site residue.

It belongs to the peptidase C79 family.

It is found in the secreted. Its subcellular location is the host cytoplasm. Its function is as follows. Effector proteins function to alter host cell physiology and promote bacterial survival in host tissues. This protease targets the host cell ubiquitin pathway by acting as a deubiquitinase in infected host cells. The protein is Deubiquitinase SseL (sseL) of Salmonella arizonae (strain ATCC BAA-731 / CDC346-86 / RSK2980).